A 1256-amino-acid polypeptide reads, in one-letter code: Splicing factor, arginine/serine-rich 19 (1256 aa).

Disordered regions lie at residues 1–33, 158–343, 371–395, 408–1030, 1112–1152, and 1221–1256; these read MEEE…SPSA, GKTV…APRR, ALSL…PEEE, PRQP…TLPP, GSLP…DKYL, and FRKH…LPPL. Basic and acidic residues predominate over residues 7–27; sequence SRGKTEESGEDRGDGPPDRDP. Residues 192-206 are compositionally biased toward low complexity; it reads SSASSSPSPSPSSSS. Residues 207–222 show a composition bias toward pro residues; the sequence is PSPPPPPPPPPPPALP. Positions 227–236 are enriched in basic and acidic residues; that stretch reads DIYDPFHPTD. Ser240 carries the post-translational modification Phosphoserine. Residues 255–265 show a composition bias toward polar residues; the sequence is TGSNPSSSAGT. Residues 268–282 show a composition bias toward acidic residues; it reads PEEEEEEEEEEEEEG. The residue at position 328 (Thr328) is a Phosphothreonine. The segment covering 382–393 has biased composition (acidic residues); sequence PEIEEGEIVQPE. A compositionally biased stretch (low complexity) spans 412-424; it reads PASVATLASVAAP. 2 positions are modified to phosphoserine: Ser442 and Ser447. Over residues 478-489 the composition is skewed to basic residues; that stretch reads KILTQRRERYRQ. Phosphoserine is present on residues Ser491, Ser493, Ser510, Ser518, and Ser520. Basic residues-rich tracts occupy residues 538-553 and 560-577; these read TARR…RSRS and RGGH…RRRS. 2 positions are modified to phosphoserine: Ser577 and Ser579. Residues 592-611 show a composition bias toward basic residues; the sequence is RERHRGKRREGGKKKKKRSR. A compositionally biased stretch (basic and acidic residues) spans 612 to 623; it reads SRAEKRSGDLEK. At Thr663 the chain carries Phosphothreonine. 2 positions are modified to phosphoserine: Ser676 and Ser682. Phosphotyrosine is present on Tyr689. A phosphoserine mark is found at Ser691 and Ser695. 2 stretches are compositionally biased toward basic and acidic residues: residues 696–709 and 719–741; these read ADER…DRRR and SREK…DRSS. 2 stretches are compositionally biased toward low complexity: residues 752–775 and 793–804; these read PGSG…SCSS and SSTTPAKDSSSS. Residue Lys812 forms a Glycyl lysine isopeptide (Lys-Gly) (interchain with G-Cter in SUMO2) linkage. Basic and acidic residues predominate over residues 813–831; it reads FSRDRESRSPFLKPDERAP. Phosphoserine occurs at positions 819 and 821. Positions 843 to 875 are enriched in basic residues; sequence KPKKTKAKAKAGAKKAKGTKGKTKPSKTRKKVR. Residues Ser876, Ser883, Ser910, and Ser912 each carry the phosphoserine modification. Residues 922–935 show a composition bias toward pro residues; it reads STPPPKVAPPPPAL. Phosphothreonine occurs at positions 923 and 936. The span at 938–947 shows a compositional bias: polar residues; that stretch reads DSQTVDSSCK. At Ser939 the chain carries Phosphoserine. Thr948 carries the post-translational modification Phosphothreonine. Residues 969–984 show a composition bias toward acidic residues; it reads EEEEEEEEEEEEEEEQ. Residues 985–1017 show a composition bias toward low complexity; sequence QPATTTATSTAAAAPSTAPSAGSTAGDSGAEDG. The tract at residues 1131–1256 is necessary for interaction with the CTD domain of POLR2A; it reads PASDKREGSS…GGPGLPLPPL (126 aa). Over residues 1133 to 1152 the composition is skewed to basic and acidic residues; it reads SDKREGSSSSEGRGDTDKYL. Residues 1244 to 1256 are compositionally biased toward pro residues; sequence PDKGGPGLPLPPL.

The protein belongs to the splicing factor SR family. Interacts with POLR2A.

The protein localises to the nucleus. May function in pre-mRNA splicing. The polypeptide is Splicing factor, arginine/serine-rich 19 (Scaf1) (Mus musculus (Mouse)).